The primary structure comprises 65 residues: Cold shock-like protein CspC (65 aa).

A CSD domain is found at glycine 3–valine 62.

In terms of assembly, homodimer.

It localises to the cytoplasm. This Bacillus cereus protein is Cold shock-like protein CspC (cspC).